The primary structure comprises 351 residues: Protein-glutamate methylesterase/protein-glutamine glutaminase 1 (351 aa).

Residues 1–115 (MVDDSAVVRQ…KQFLTESADE (115 aa)) form the Response regulatory domain. Residue Asp49 is modified to 4-aspartylphosphate. The CheB-type methylesterase domain occupies 161 to 351 (AQTTERIVAI…MAREIVTQLQ (191 aa)). Catalysis depends on residues Ser173, His199, and Asp295.

It belongs to the CheB family. Post-translationally, phosphorylated by CheA. Phosphorylation of the N-terminal regulatory domain activates the methylesterase activity.

It is found in the cytoplasm. The enzyme catalyses [protein]-L-glutamate 5-O-methyl ester + H2O = L-glutamyl-[protein] + methanol + H(+). It carries out the reaction L-glutaminyl-[protein] + H2O = L-glutamyl-[protein] + NH4(+). Involved in chemotaxis. Part of a chemotaxis signal transduction system that modulates chemotaxis in response to various stimuli. Catalyzes the demethylation of specific methylglutamate residues introduced into the chemoreceptors (methyl-accepting chemotaxis proteins or MCP) by CheR. Also mediates the irreversible deamidation of specific glutamine residues to glutamic acid. The polypeptide is Protein-glutamate methylesterase/protein-glutamine glutaminase 1 (Xanthomonas oryzae pv. oryzae (strain MAFF 311018)).